The sequence spans 222 residues: Superoxide dismutase [Mn], mitochondrial (222 aa).

The transit peptide at methionine 1–glutamine 24 directs the protein to the mitochondrion. Residue histidine 50 participates in Mn(2+) binding. A 3'-nitrotyrosine modification is found at tyrosine 58. An N6-acetyllysine; alternate mark is found at lysine 68 and lysine 75. Residues lysine 68 and lysine 75 each carry the N6-succinyllysine; alternate modification. Histidine 98 is a binding site for Mn(2+). Residue lysine 114 is modified to N6-acetyllysine. N6-acetyllysine; alternate is present on residues lysine 122 and lysine 130. N6-succinyllysine; alternate is present on residues lysine 122 and lysine 130. Mn(2+)-binding residues include aspartate 183 and histidine 187. Lysine 202 is subject to N6-acetyllysine.

This sequence belongs to the iron/manganese superoxide dismutase family. In terms of assembly, homotetramer. Mn(2+) is required as a cofactor. Nitrated under oxidative stress. Nitration coupled with oxidation inhibits the catalytic activity. In terms of processing, acetylation at Lys-122 decreases enzymatic activity. Deacetylated by SIRT3 upon exposure to ionizing radiations or after long fasting. Post-translationally, polyubiquitinated; leading to proteasomal degradation. Deubiquitinated by USP36 which increases protein stability.

The protein localises to the mitochondrion matrix. It carries out the reaction 2 superoxide + 2 H(+) = H2O2 + O2. Its function is as follows. Destroys superoxide anion radicals which are normally produced within the cells and which are toxic to biological systems. This Pongo pygmaeus (Bornean orangutan) protein is Superoxide dismutase [Mn], mitochondrial (SOD2).